Here is a 473-residue protein sequence, read N- to C-terminus: Bifunctional protein HldE (473 aa).

The segment at 1–317 (MKLSMPRFDQ…RRAIQREEGS (317 aa)) is ribokinase. 194–197 (NLSE) serves as a coordination point for ATP. The active site involves Asp-263. The segment at 343–473 (FTNGCFDILH…TAIVEKIRKN (131 aa)) is cytidylyltransferase.

This sequence in the N-terminal section; belongs to the carbohydrate kinase PfkB family. The protein in the C-terminal section; belongs to the cytidylyltransferase family. Homodimer.

The enzyme catalyses D-glycero-beta-D-manno-heptose 7-phosphate + ATP = D-glycero-beta-D-manno-heptose 1,7-bisphosphate + ADP + H(+). The catalysed reaction is D-glycero-beta-D-manno-heptose 1-phosphate + ATP + H(+) = ADP-D-glycero-beta-D-manno-heptose + diphosphate. It functions in the pathway nucleotide-sugar biosynthesis; ADP-L-glycero-beta-D-manno-heptose biosynthesis; ADP-L-glycero-beta-D-manno-heptose from D-glycero-beta-D-manno-heptose 7-phosphate: step 1/4. Its pathway is nucleotide-sugar biosynthesis; ADP-L-glycero-beta-D-manno-heptose biosynthesis; ADP-L-glycero-beta-D-manno-heptose from D-glycero-beta-D-manno-heptose 7-phosphate: step 3/4. Its function is as follows. Catalyzes the phosphorylation of D-glycero-D-manno-heptose 7-phosphate at the C-1 position to selectively form D-glycero-beta-D-manno-heptose-1,7-bisphosphate. Functionally, catalyzes the ADP transfer from ATP to D-glycero-beta-D-manno-heptose 1-phosphate, yielding ADP-D-glycero-beta-D-manno-heptose. The sequence is that of Bifunctional protein HldE from Pseudomonas putida (strain W619).